A 128-amino-acid chain; its full sequence is Ribonuclease P protein component (128 aa).

The protein belongs to the RnpA family. As to quaternary structure, consists of a catalytic RNA component (M1 or rnpB) and a protein subunit.

The catalysed reaction is Endonucleolytic cleavage of RNA, removing 5'-extranucleotides from tRNA precursor.. Its function is as follows. RNaseP catalyzes the removal of the 5'-leader sequence from pre-tRNA to produce the mature 5'-terminus. It can also cleave other RNA substrates such as 4.5S RNA. The protein component plays an auxiliary but essential role in vivo by binding to the 5'-leader sequence and broadening the substrate specificity of the ribozyme. This Methylococcus capsulatus (strain ATCC 33009 / NCIMB 11132 / Bath) protein is Ribonuclease P protein component.